A 395-amino-acid chain; its full sequence is Fe(3+) ions import ATP-binding protein FbpC 2 (395 aa).

The disordered stretch occupies residues 1 to 21 (MHIAQELADETCNSPRGAGHA). The ABC transporter domain maps to 23–264 (LRYPSDRRTA…PKTLFVADFI (242 aa)). 66–73 (GPSGCGKT) lines the ATP pocket.

This sequence belongs to the ABC transporter superfamily. Fe(3+) ion importer (TC 3.A.1.10) family. The complex is composed of two ATP-binding proteins (FbpC), two transmembrane proteins (FbpB) and a solute-binding protein (FbpA).

Its subcellular location is the cell inner membrane. It catalyses the reaction Fe(3+)(out) + ATP + H2O = Fe(3+)(in) + ADP + phosphate + H(+). Part of the ABC transporter complex FbpABC involved in Fe(3+) ions import. Responsible for energy coupling to the transport system. The polypeptide is Fe(3+) ions import ATP-binding protein FbpC 2 (Rhizobium meliloti (strain 1021) (Ensifer meliloti)).